The sequence spans 489 residues: Monocarboxylate transporter 2 (489 aa).

Topologically, residues 1–21 are cytoplasmic; it reads MPSESSVKATAAPPPFPLPPD. Residues 22–42 traverse the membrane as a helical segment; sequence GGWGWVVVCASFISIGFSYAF. Over 43–65 the chain is Extracellular; sequence PKAVTVFFNDIKDIFKTTSSQIA. The helical transmembrane segment at 66-86 threads the bilayer; it reads WISSIMLAVMYAGGPISSVLV. Residues 87 to 95 are Cytoplasmic-facing; that stretch reads NNYGSRPVV. A helical membrane pass occupies residues 96 to 116; sequence IVGGLLCCTGMILASFSSSVI. The Extracellular portion of the chain corresponds to 117–121; that stretch reads ELYLT. A helical transmembrane segment spans residues 122-142; sequence VGFIGGLGLAFNLQPALTIIG. Over 143–154 the chain is Cytoplasmic; the sequence is KYFYRKRPLANG. The chain crosses the membrane as a helical span at residues 155 to 175; the sequence is FAMAGSPVFLSTLAPFNQFLF. Residues 176 to 179 lie on the Extracellular side of the membrane; sequence NSYG. Residues 180 to 200 form a helical membrane-spanning segment; the sequence is WKGSFLILGAIFLHSCVAGCL. Residues 201-250 are Cytoplasmic-facing; the sequence is MRPVGPSPRAAKSKSKVGSRQDSSTKRLSKVSTAEKINRFLDFGLFTHRG. Residues 206 to 227 are disordered; the sequence is PSPRAAKSKSKVGSRQDSSTKR. Residues 251-271 traverse the membrane as a helical segment; that stretch reads FLIYLSGNVVLFLGMFAPIIF. The Extracellular segment spans residues 272–286; the sequence is LAPYAKDKGVDDYNS. Residues 287–307 traverse the membrane as a helical segment; the sequence is AFLLSVMAFTDMFARPSVGLI. Residues 308 to 316 lie on the Cytoplasmic side of the membrane; it reads ANTSLIRPR. A helical transmembrane segment spans residues 317–337; that stretch reads IQYLFSVAIMFTGICHLLCPL. The Extracellular portion of the chain corresponds to 338–342; that stretch reads AHSYT. A helical membrane pass occupies residues 343–363; that stretch reads ALVVYVIFFGIGFGSISSLLF. Residues 364–377 are Cytoplasmic-facing; that stretch reads ECLMDQVGASRFSS. Residues 378-398 form a helical membrane-spanning segment; the sequence is AVGLVTIVECCPVLFGPPLAG. The Extracellular portion of the chain corresponds to 399 to 410; it reads KLLDITGQYKYL. A helical transmembrane segment spans residues 411 to 431; sequence YIASGIVVLSSGIYLLICNAI. Residues 432-489 are Cytoplasmic-facing; sequence NYRLLEKERKREKARRKKSASQASKEMEALSRSKQDDVTVKVSNTHNPPSDRDKESSI. Positions 441 to 489 are disordered; sequence KREKARRKKSASQASKEMEALSRSKQDDVTVKVSNTHNPPSDRDKESSI. Basic and acidic residues-rich tracts occupy residues 456–470 and 480–489; these read KEMEALSRSKQDDVT and PSDRDKESSI.

Belongs to the major facilitator superfamily. Monocarboxylate porter (TC 2.A.1.13) family. As to quaternary structure, homodimer. Interacts with GRID2IP. Interacts with EMB; interaction mediates SLC16A7 targeting to the plasma membrane. Interacts with isoform 2 of BSG. In terms of tissue distribution, detected in brain and kidney (at protein level).

The protein resides in the cell membrane. It is found in the basolateral cell membrane. Its subcellular location is the cytoplasm. The enzyme catalyses 3-methyl-2-oxobutanoate(out) + H(+)(out) = 3-methyl-2-oxobutanoate(in) + H(+)(in). It carries out the reaction (S)-lactate(in) + H(+)(in) = (S)-lactate(out) + H(+)(out). It catalyses the reaction acetoacetate(out) + H(+)(out) = acetoacetate(in) + H(+)(in). The catalysed reaction is (R)-3-hydroxybutanoate(out) + H(+)(out) = (R)-3-hydroxybutanoate(in) + H(+)(in). The enzyme catalyses 4-methyl-2-oxopentanoate(out) + H(+)(out) = 4-methyl-2-oxopentanoate(in) + H(+)(in). It carries out the reaction pyruvate(out) + H(+)(out) = pyruvate(in) + H(+)(in). It catalyses the reaction (S)-3-hydroxybutanoate(out) + H(+)(out) = (S)-3-hydroxybutanoate(in) + H(+)(in). Its activity is regulated as follows. Transport activity exhibits steep dependence on substrate concentration. Substrate concentration sensitivity of SLC16A7 arises from the strong inter-subunit cooperativity of the SLC16A7 dimer during transport. Inhibited by AR-C155858. Its function is as follows. Proton-coupled monocarboxylate symporter. Catalyzes the rapid transport across the plasma membrane of monocarboxylates such as L-lactate, pyruvate and ketone bodies, acetoacetate, beta-hydroxybutyrate and acetate. Dimerization is functionally required and both subunits work cooperatively in transporting substrate. In Rattus norvegicus (Rat), this protein is Monocarboxylate transporter 2 (Slc16a7).